Consider the following 455-residue polypeptide: Protein FAM124B (455 aa).

Ser-49 carries the phosphoserine modification. Residues 270–322 (TSVSAKRTSEPRSQRNQGKRSQGHSLELPEPSGSPTSDRCAGTSWKSPGRSFQ) are disordered. A compositionally biased stretch (polar residues) spans 313-322 (SWKSPGRSFQ).

Belongs to the FAM124 family. As to quaternary structure, interacts with CHD7 and CHD8.

Its subcellular location is the nucleus. The chain is Protein FAM124B (FAM124B) from Homo sapiens (Human).